The following is a 686-amino-acid chain: Potassium-transporting ATPase ATP-binding subunit 2 (686 aa).

The next 4 membrane-spanning stretches (helical) occupy residues M37–F57, M64–F84, L223–I243, and V255–I275. The active-site 4-aspartylphosphate intermediate is D306. ATP contacts are provided by residues D343, E347, F376–S383, and K395. 2 residues coordinate Mg(2+): D518 and D522. The next 3 membrane-spanning stretches (helical) occupy residues F588–M608, A616–M636, and V656–I676.

This sequence belongs to the cation transport ATPase (P-type) (TC 3.A.3) family. Type IA subfamily. As to quaternary structure, the system is composed of three essential subunits: KdpA, KdpB and KdpC.

The protein localises to the cell membrane. It carries out the reaction K(+)(out) + ATP + H2O = K(+)(in) + ADP + phosphate + H(+). Part of the high-affinity ATP-driven potassium transport (or Kdp) system, which catalyzes the hydrolysis of ATP coupled with the electrogenic transport of potassium into the cytoplasm. This subunit is responsible for energy coupling to the transport system and for the release of the potassium ions to the cytoplasm. The sequence is that of Potassium-transporting ATPase ATP-binding subunit 2 from Listeria innocua serovar 6a (strain ATCC BAA-680 / CLIP 11262).